The following is a 366-amino-acid chain: Ferredoxin--NADP reductase (366 aa).

Asp-51, Gln-59, Tyr-64, Val-104, Phe-139, Asp-308, and Thr-349 together coordinate FAD.

The protein belongs to the ferredoxin--NADP reductase type 2 family. In terms of assembly, homodimer. It depends on FAD as a cofactor.

It catalyses the reaction 2 reduced [2Fe-2S]-[ferredoxin] + NADP(+) + H(+) = 2 oxidized [2Fe-2S]-[ferredoxin] + NADPH. The sequence is that of Ferredoxin--NADP reductase from Polaromonas naphthalenivorans (strain CJ2).